A 332-amino-acid chain; its full sequence is Phospholipase A2 inhibitor beta (332 aa).

Positions 1 to 23 (MKSSVPSLLFVSLVMSLNSYTQQ) are cleaved as a signal peptide. N-linked (GlcNAc...) asparagine glycosylation is present at N35. LRR repeat units follow at residues 78–101 (LPNL…LFRN), 103–125 (PELH…IFTS), 127–149 (TSLT…WFET), 150–173 (LKEL…CFDK), 175–197 (EKLT…MFSG), 198–221 (LDNL…SFHG), 223–245 (PKLS…VFQP), and 247–269 (NHXV…VAIP). Residue N232 is glycosylated (N-linked (GlcNAc...) asparagine). N272 is a glycosylation site (N-linked (GlcNAc...) asparagine). The 52-residue stretch at 280–331 (NPWACNCRMDNLLTWVKEHKIDLYSKQEIVCAFPKSFKGEEATSLHRSQICP) folds into the LRRCT domain.

Belongs to the beta-type phospholipase A2 inhibitor family. As to quaternary structure, homotrimer.

It localises to the secreted. Functionally, inhibits the enzymatic activity of the basic phospholipase A2 (PLA2). The protein is Phospholipase A2 inhibitor beta of Elaphe climacophora (Japanese rat snake).